Here is a 98-residue protein sequence, read N- to C-terminus: MIPTYMNIMLAFTISLLGMLTYRSHLVASLLCLEGMTMSLFIMTALIASNTHSPLINIMPIILLVFAACEAAVGLALLISISNTYGLDYIHNLNLLQC.

3 consecutive transmembrane segments (helical) span residues 1–21, 27–47, and 61–81; these read MIPT…GMLT, VASL…TALI, and IILL…LISI.

Belongs to the complex I subunit 4L family. As to quaternary structure, core subunit of respiratory chain NADH dehydrogenase (Complex I) which is composed of 45 different subunits.

The protein localises to the mitochondrion inner membrane. It carries out the reaction a ubiquinone + NADH + 5 H(+)(in) = a ubiquinol + NAD(+) + 4 H(+)(out). Functionally, core subunit of the mitochondrial membrane respiratory chain NADH dehydrogenase (Complex I) which catalyzes electron transfer from NADH through the respiratory chain, using ubiquinone as an electron acceptor. Part of the enzyme membrane arm which is embedded in the lipid bilayer and involved in proton translocation. In Macaca sylvanus (Barbary macaque), this protein is NADH-ubiquinone oxidoreductase chain 4L (MT-ND4L).